Here is a 399-residue protein sequence, read N- to C-terminus: CCA-adding enzyme (399 aa).

G33 and R36 together coordinate ATP. CTP-binding residues include G33 and R36. 2 residues coordinate Mg(2+): D46 and D48. Residues R117, D160, R163, R166, and R169 each contribute to the ATP site. CTP is bound by residues R117, D160, R163, R166, and R169.

It belongs to the tRNA nucleotidyltransferase/poly(A) polymerase family. Bacterial CCA-adding enzyme type 3 subfamily. Homodimer. Mg(2+) serves as cofactor.

It carries out the reaction a tRNA precursor + 2 CTP + ATP = a tRNA with a 3' CCA end + 3 diphosphate. The catalysed reaction is a tRNA with a 3' CCA end + 2 CTP + ATP = a tRNA with a 3' CCACCA end + 3 diphosphate. Functionally, catalyzes the addition and repair of the essential 3'-terminal CCA sequence in tRNAs without using a nucleic acid template. Adds these three nucleotides in the order of C, C, and A to the tRNA nucleotide-73, using CTP and ATP as substrates and producing inorganic pyrophosphate. tRNA 3'-terminal CCA addition is required both for tRNA processing and repair. Also involved in tRNA surveillance by mediating tandem CCA addition to generate a CCACCA at the 3' terminus of unstable tRNAs. While stable tRNAs receive only 3'-terminal CCA, unstable tRNAs are marked with CCACCA and rapidly degraded. The sequence is that of CCA-adding enzyme from Lactobacillus helveticus (strain DPC 4571).